A 148-amino-acid polypeptide reads, in one-letter code: Arginine repressor (148 aa).

The protein belongs to the ArgR family.

It is found in the cytoplasm. It functions in the pathway amino-acid biosynthesis; L-arginine biosynthesis [regulation]. In terms of biological role, regulates arginine biosynthesis genes. This Chlorobium chlorochromatii (strain CaD3) protein is Arginine repressor.